A 668-amino-acid polypeptide reads, in one-letter code: NADH-ubiquinone oxidoreductase chain 5 (668 aa).

The next 18 membrane-spanning stretches (helical) occupy residues 1-21, 31-51, 81-101, 111-131, 133-153, 178-198, 211-231, 251-271, 283-303, 311-331, 339-359, 375-395, 421-441, 462-482, 519-539, 566-586, 629-649, and 650-668; these read MYIINLILPLIGSIITGLFGH, IAVGCMMLTALSSLYIGYEIL, LTSIMIIVITCISSMVHLYSM, TRFFSYLSLFTFFMMLLVTAD, FVQLFFGWEGVGIMSYLLINF, LFFGILLVFLVFKSVDFSVIF, LLGYEVNAITLIGSFIVIGVV, TPVSALLHAATMVTAGVFLVL, ILNILTIIGALTTLFATTIGI, VIAYSTCSQLGYMIFACGLLN, LTTHAFFKALLFLSAGSVIHG, LMPLTYQCMLIGTLALTGFPF, AIIGYVAAFGTTFYSFRLLIL, TNMVIPLVILAICSIFIGYLT, LLPLFAFIYGVLTPVLFYFNL, FDFLSRVLIAVPFFHLSYDVM, IVQAILLIIFVGIFSFMIGFL, and YVELFVILGALYLCLPKIK.

The protein belongs to the complex I subunit 5 family.

It localises to the mitochondrion inner membrane. The catalysed reaction is a ubiquinone + NADH + 5 H(+)(in) = a ubiquinol + NAD(+) + 4 H(+)(out). Its function is as follows. Core subunit of the mitochondrial membrane respiratory chain NADH dehydrogenase (Complex I) that is believed to belong to the minimal assembly required for catalysis. Complex I functions in the transfer of electrons from NADH to the respiratory chain. The immediate electron acceptor for the enzyme is believed to be ubiquinone. This chain is NADH-ubiquinone oxidoreductase chain 5 (nad5), found in Dictyostelium citrinum (Slime mold).